The primary structure comprises 203 residues: Large ribosomal subunit protein uL13 (203 aa).

Position 2 is an N-acetylalanine (A2). A Citrulline modification is found at R59. A Phosphoserine modification is found at S77. R140 bears the Citrulline mark. An N6-acetyllysine modification is found at K191.

It belongs to the universal ribosomal protein uL13 family. Component of the 60S ribosome. Component of the GAIT complex. Interacts with EIF4G1. Phosphorylation at Ser-77 upon interferon-gamma treatment in macrophages involves a DAPK1-DAPK3 kinase cascade and is causing release from the ribosome, association with the GAIT complex and subsequent involvement in transcript-selective translation inhibition. In terms of processing, citrullinated by PADI4.

The protein localises to the cytoplasm. Functionally, associated with ribosomes but is not required for canonical ribosome function and has extra-ribosomal functions. Component of the GAIT (gamma interferon-activated inhibitor of translation) complex which mediates interferon-gamma-induced transcript-selective translation inhibition in inflammation processes. Upon interferon-gamma activation and subsequent phosphorylation dissociates from the ribosome and assembles into the GAIT complex which binds to stem loop-containing GAIT elements in the 3'-UTR of diverse inflammatory mRNAs (such as ceruplasmin) and suppresses their translation. In the GAIT complex interacts with m7G cap-bound eIF4G at or near the eIF3-binding site and blocks the recruitment of the 43S ribosomal complex. Involved in methylation of rRNA. In Canis lupus familiaris (Dog), this protein is Large ribosomal subunit protein uL13 (RPL13A).